We begin with the raw amino-acid sequence, 64 residues long: MISAKSKTKRITITFEIPEDIDAKKFKDDVKRYVRYKLLANKLYELLEGENIEEIEEEIRKRRE.

In terms of biological role, possibly the antitoxin component of a type II toxin-antitoxin (TA) system. Its cognate toxin is VapC1 (Potential). The chain is Putative antitoxin VapB1 (vapB1) from Methanocaldococcus jannaschii (strain ATCC 43067 / DSM 2661 / JAL-1 / JCM 10045 / NBRC 100440) (Methanococcus jannaschii).